An 872-amino-acid chain; its full sequence is MSFGGMFDGAGSGVFSYDAGGGGGGGGVHNSRLLPTPPVPKPGGGFAAPGLSLGLQTMDGSQLGDVNRSLAMMGNGGSGSGGDGDSLGRGREEENDSRSGSDNLDGASGDELDPDNSNPRKKKKRYHRHTPQQIQELEAVFKECPHPDEKQRMELSRRLNLESRQVKFWFQNRRTQMKQTQIERHENALLRQENDKLRAENMTIREAMRNPMCASCGGAAVLGEVSLEEQHLRIENARLKDELDRVCALAGKFLGRPISSISSPGPPSLQACSGLELGVGSNGGFGLGALGASAAMQSIPDLMGGSSGLTGGPVGSAAMRLPAGIGGLDGAMHAAAADGGAIDRAVLLELALAAMDELVKVAQMDEPLWLPSLDGGFETLNYDEYHRAFARVVGQCPAGYVSEATRESGIAIISSVDLVDSLMDAPRWSEMFPCVVARASTTDIISSGMGGTRSGSIQLMHAELQVLSPLVPIREVVFLRFCKQHAEGLWAVVDVSVDAVLRPDQNGGGGSSSSSYMGCRLLPTGCIVQDMNNGYSKVTWVVHAEYDETAAHQLYRPLLRSGQALGARRWLASLQRQCQYLAILCSNSLPARDHAAITPVGRRSMLKLAQRMTDNFCAGVCASAAQKWRRLDEWRGEGGGGGGGGGGDGEDKVRMMARHSVGAPGEPPGVVLSATTSVRLPGTLPQRVFDYLRDEQRRGDWDILANGEAMQEMDHIAKGQHHGNAVSLLRPNATSGNQNNMLILQETCTDSSGSLVVYAPVDVQSMHVVMNGGDSAYVSLLPSGFAILPDGHNNGASPSPAEVGSGASPNSAAGGGGGSNNTGSLVTVAFQILVNNLPTAKLTVESVDTVSNLLSCTIQKIKSALQASIISP.

Disordered stretches follow at residues 28 to 53 (VHNS…GLSL) and 67 to 130 (NRSL…HRHT). Gly residues predominate over residues 74-85 (GNGGSGSGGDGD). The span at 86–99 (SLGRGREEENDSRS) shows a compositional bias: basic and acidic residues. Basic residues predominate over residues 119 to 130 (PRKKKKRYHRHT). A DNA-binding region (homeobox) is located at residues 122-181 (KKKRYHRHTPQQIQELEAVFKECPHPDEKQRMELSRRLNLESRQVKFWFQNRRTQMKQTQ). A coiled-coil region spans residues 176–248 (QMKQTQIERH…LKDELDRVCA (73 aa)). An START domain is found at 340 to 583 (GAIDRAVLLE…LQRQCQYLAI (244 aa)). The tract at residues 792–818 (HNNGASPSPAEVGSGASPNSAAGGGGG) is disordered.

This sequence belongs to the HD-ZIP homeobox family. Class IV subfamily.

The protein localises to the nucleus. Functionally, probable transcription factor. The sequence is that of Homeobox-leucine zipper protein ROC6 (ROC6) from Oryza sativa subsp. japonica (Rice).